The sequence spans 262 residues: Steroid 5-alpha-reductase DET2 (262 aa).

The next 6 helical transmembrane spans lie at 13–33, 51–71, 79–99, 113–133, 148–168, and 205–225; these read CLLT…FLQA, IAWF…FPFG, SLLL…IYPL, FPIT…YIQA, WFWW…YINI, and AIEW…GFFL.

The protein belongs to the steroid 5-alpha reductase family.

Its subcellular location is the membrane. The enzyme catalyses a 3-oxo-5alpha-steroid + NADP(+) = a 3-oxo-Delta(4)-steroid + NADPH + H(+). It carries out the reaction 5alpha-campestan-3-one + NADP(+) = campest-4-en-3-one + NADPH + H(+). It catalyses the reaction (22S,24R)-22-hydroxy-5alpha-ergostan-3-one + NADP(+) = (22S)-22-hydroxycampest-4-en-3-one + NADPH + H(+). The catalysed reaction is 3-dehydro-6-deoxoteasterone + NADP(+) = (22R,23R)-22,23-dihydroxycampest-4-en-3-one + NADPH + H(+). It participates in plant hormone biosynthesis; brassinosteroid biosynthesis. Its activity is regulated as follows. Inhibited by the 4-azasteroids 4-MA. In terms of biological role, involved in a reduction step in the biosynthesis of the plant steroid, brassinolide (BL); acts at the second step in brassinolide biosynthesis in the 5alpha-reduction of (24R)- 24-methylcholest-4-en-3-one, which is further modified to form campestanol. Can use progesterone, testosterone, androstenedione and campestenone as substrate. Also catalyzes the conversion of campest-4-en-3-one (campesta-4-en-3-one, 4-en-3-one) to campest-3-one (campesta-3-one, 3-one), of (22S,24R)-22-hydroxyergost-4-en-3-one (22-hydroxy-campesta-4-en-3-one, 22-OH-4-en-3-one) to (22S,24R)-22-hydroxy-5alpha-ergostan-3-one (22-hydroxy-campesta-3-one, 22-OH-3-one), and of (22R,23R)-22,23-dihydroxy-5alpha-campestan-3-one (22,23,diOH-4-en-3-one) to (22R,23R)-22,23-dihydroxycampest-4-en-3-one (6-deoxo3DT). Required for the brassinosteroid- (BR) dependent regulation of seed size and shape as well as embryo development. The chain is Steroid 5-alpha-reductase DET2 from Arabidopsis thaliana (Mouse-ear cress).